The following is a 309-amino-acid chain: Probable manganese-dependent inorganic pyrophosphatase (309 aa).

The Mn(2+) site is built by His-9, Asp-13, Asp-15, Asp-75, His-97, and Asp-149.

This sequence belongs to the PPase class C family. Requires Mn(2+) as cofactor.

It localises to the cytoplasm. It catalyses the reaction diphosphate + H2O = 2 phosphate + H(+). The polypeptide is Probable manganese-dependent inorganic pyrophosphatase (Staphylococcus epidermidis (strain ATCC 12228 / FDA PCI 1200)).